The chain runs to 461 residues: Coagulation factor IX (461 aa).

A signal peptide spans methionine 1–cysteine 28. The propeptide occupies threonine 29–arginine 46. Tyrosine 47, asparagine 48, glutamate 53, glutamate 54, glutamate 61, glutamate 63, glutamate 66, glutamate 67, glutamate 72, glutamate 73, and glutamate 76 together coordinate Ca(2+). A Gla domain is found at tyrosine 47–valine 92. 4-carboxyglutamate occurs at positions 53, 54, 61, 63, 66, 67, 72, 73, 76, 79, and 82. Glutamate 61 is a binding site for Mg(2+). A disulfide bridge links cysteine 64 with cysteine 69. Glutamate 66 contributes to the Mg(2+) binding site. Glutamate 72 is a Mg(2+) binding site. Mg(2+) is bound at residue glutamate 76. Glutamate 82 serves as a coordination point for Ca(2+). Residue glutamate 82 participates in Mg(2+) binding. O-linked (GalNAc...) threonine glycosylation occurs at threonine 85. Residues glutamate 86, aspartate 93, glycine 94, and glutamine 96 each coordinate Ca(2+). Glutamate 86 is modified (4-carboxyglutamate). Residue glutamate 86 coordinates Mg(2+). In terms of domain architecture, EGF-like 1; calcium-binding spans aspartate 93–glutamate 129. 10 disulfides stabilise this stretch: cysteine 97–cysteine 108, cysteine 102–cysteine 117, cysteine 119–cysteine 128, cysteine 134–cysteine 145, cysteine 141–cysteine 155, cysteine 157–cysteine 170, cysteine 178–cysteine 335, cysteine 252–cysteine 268, cysteine 382–cysteine 396, and cysteine 407–cysteine 435. An O-linked (Glc...) serine glycan is attached at serine 99. Serine 107 carries O-linked (Fuc...) serine glycosylation. The Ca(2+) site is built by aspartate 110 and aspartate 111. The residue at position 110 (aspartate 110) is a (3R)-3-hydroxyaspartate. Serine 114 is subject to Phosphoserine. An EGF-like 2 domain is found at leucine 130–glutamate 171. Positions alanine 192–arginine 226 are cleaved as a propeptide — activation peptide. Tyrosine 201 is modified (sulfotyrosine). Serine 204 bears the Phosphoserine mark. Threonine 205 carries the phosphothreonine; alternate modification. O-linked (GalNAc...) threonine; alternate glycosylation is present at threonine 205. N-linked (GlcNAc...) asparagine glycosylation is present at asparagine 213. Threonine 215 and threonine 225 each carry an O-linked (GalNAc...) threonine glycan. The Peptidase S1 domain occupies valine 227–lysine 459. Residue histidine 267 is the Charge relay system of the active site. Glutamate 281, asparagine 283, glutamate 286, glutamate 288, and glutamate 291 together coordinate Ca(2+). Aspartate 315 (charge relay system) is an active-site residue. The active-site Charge relay system is serine 411.

Belongs to the peptidase S1 family. In terms of assembly, heterodimer of a light chain and a heavy chain; disulfide-linked. Interacts (inactive and activated) with F11 (activated) in calcium-dependent manner. Interacts with SERPINC1. Activated by factor XIa, which excises the activation peptide. The propeptide can also be removed by snake venom protease. In terms of processing, the iron and 2-oxoglutarate dependent 3-hydroxylation of aspartate and asparagine is (R) stereospecific within EGF domains. Activated by coagulation factor VIIa-tissue factor (F7-F3) complex in calcium-dependent manner. Post-translationally, predominantly O-glucosylated at Ser-99 by POGLUT1 in vitro.

The protein localises to the secreted. The catalysed reaction is Selective cleavage of Arg-|-Ile bond in factor X to form factor Xa.. Its function is as follows. Factor IX is a vitamin K-dependent plasma protein that participates in the intrinsic pathway of blood coagulation by converting factor X to its active form in the presence of Ca(2+) ions, phospholipids, and factor VIIIa. The polypeptide is Coagulation factor IX (F9) (Pan troglodytes (Chimpanzee)).